Reading from the N-terminus, the 560-residue chain is Eukaryotic translation initiation factor 3 subunit D-1 (560 aa).

Positions 98–166 (VQKPPHQRGR…RGPPPKMRES (69 aa)) are disordered. A compositionally biased stretch (basic residues) spans 100-121 (KPPHQRGRFRNMRNSRSGRGRN). Phosphothreonine is present on threonine 128. The segment covering 147-156 (GRGMGKKFGH) has biased composition (basic residues). The RNA gate stretch occupies residues 291–305 (EFDLLTVNESSVEPP).

It belongs to the eIF-3 subunit D family. As to quaternary structure, component of the eukaryotic translation initiation factor 3 (eIF-3) complex. The eIF-3 complex interacts with pix.

Its subcellular location is the cytoplasm. Its function is as follows. mRNA cap-binding component of the eukaryotic translation initiation factor 3 (eIF-3) complex, which is involved in protein synthesis of a specialized repertoire of mRNAs and, together with other initiation factors, stimulates binding of mRNA and methionyl-tRNAi to the 40S ribosome. The eIF-3 complex specifically targets and initiates translation of a subset of mRNAs involved in cell proliferation. In the eIF-3 complex, eif3d specifically recognizes and binds the 7-methylguanosine cap of a subset of mRNAs. The chain is Eukaryotic translation initiation factor 3 subunit D-1 from Drosophila melanogaster (Fruit fly).